A 392-amino-acid chain; its full sequence is Phospho-N-acetylmuramoyl-pentapeptide-transferase (392 aa).

10 helical membrane-spanning segments follow: residues tyrosine 24–glycine 44, threonine 76–leucine 96, phenylalanine 100–tryptophan 120, tyrosine 137–glutamate 157, valine 193–serine 213, glycine 225–threonine 245, alanine 262–phenylalanine 282, valine 289–isoleucine 309, isoleucine 314–valine 334, and glutamine 369–leucine 389.

The protein belongs to the glycosyltransferase 4 family. MraY subfamily. The cofactor is Mg(2+).

It is found in the cell inner membrane. It catalyses the reaction UDP-N-acetyl-alpha-D-muramoyl-L-alanyl-gamma-D-glutamyl-meso-2,6-diaminopimeloyl-D-alanyl-D-alanine + di-trans,octa-cis-undecaprenyl phosphate = di-trans,octa-cis-undecaprenyl diphospho-N-acetyl-alpha-D-muramoyl-L-alanyl-D-glutamyl-meso-2,6-diaminopimeloyl-D-alanyl-D-alanine + UMP. Its pathway is cell wall biogenesis; peptidoglycan biosynthesis. Its function is as follows. Catalyzes the initial step of the lipid cycle reactions in the biosynthesis of the cell wall peptidoglycan: transfers peptidoglycan precursor phospho-MurNAc-pentapeptide from UDP-MurNAc-pentapeptide onto the lipid carrier undecaprenyl phosphate, yielding undecaprenyl-pyrophosphoryl-MurNAc-pentapeptide, known as lipid I. This Paracidovorax citrulli (strain AAC00-1) (Acidovorax citrulli) protein is Phospho-N-acetylmuramoyl-pentapeptide-transferase.